The chain runs to 333 residues: Ribosome biogenesis regulatory protein homolog (333 aa).

2 disordered regions span residues 227–248 (KANV…VSGE) and 271–333 (AAAV…ARKG). Basic and acidic residues predominate over residues 278–295 (LREKKEKSERKGAKDQTR). A compositionally biased stretch (basic residues) spans 324–333 (GANKAKARKG).

This sequence belongs to the RRS1 family.

Its subcellular location is the nucleus. It localises to the nucleolus. Functionally, involved in ribosomal large subunit assembly. This chain is Ribosome biogenesis regulatory protein homolog, found in Caenorhabditis elegans.